The sequence spans 507 residues: Cyclic GMP-AMP synthase (507 aa).

The tract at residues 1-146 (MEDPRRRTTA…PRAPRGSRKE (146 aa)) is DNA-binding. The interval 1–151 (MEDPRRRTTA…GSRKEPDKLK (151 aa)) is disordered. The segment covering 7 to 18 (RTTAPRAKKPSA) has biased composition (basic residues). Residues 44–57 (RRAERDGDTTEKPR) show a composition bias toward basic and acidic residues. Positions 48–59 (RDGDTTEKPRAP) are required for association with the cell membrane. Thr-52 is modified (phosphothreonine). The segment at 119 to 132 (RKVVRGPSHRRGAR) is required for activation upon DNA viral infection. A compositionally biased stretch (basic residues) spans 121–131 (VVRGPSHRRGA). A Nuclear export signal motif is present at residues 154–159 (LDKLRL). Lys-156 carries the post-translational modification N6-lactoyllysine. The segment at 158-201 (RLKRKDISEAAETVNKVVERLLRRMQKRESEFKGVEQLNTGSYY) is DNA-binding. Glu-176 carries the polyADP-ribosyl glutamic acid modification. Position 197 (Thr-197) interacts with GTP. Position 199 (Ser-199) interacts with ATP. Ser-199 carries the phosphoserine modification. Tyr-201 carries the post-translational modification Phosphotyrosine. Positions 211 and 213 each coordinate Mg(2+). Residue Asp-213 coordinates 2',3'-cGAMP. Residue Lys-217 forms a Glycyl lysine isopeptide (Lys-Gly) (interchain with G-Cter in SUMO) linkage. Lys-271 is covalently cross-linked (Glycyl lysine isopeptide (Lys-Gly) (interchain with G-Cter in ubiquitin)). Glu-272 carries the post-translational modification 5-glutamyl polyglutamate. Residues 281–291 (DVSVEKEKPGS) carry the Nuclear localization signal motif. Gly-290 is a binding site for 2',3'-cGAMP. Ser-291 is modified (phosphoserine; by CDK1 and PKB). Glu-302 carries the 5-glutamyl glutamate modification. Asp-307 is a GTP binding site. Asp-307 provides a ligand contact to Mg(2+). Residue Asp-307 participates in 2',3'-cGAMP binding. Residues 329 to 370 (QGWLGTKVRTNLRREPFYLVPKNAKDGNSFQGETWRLSFSHT) are interaction with collided ribosomes. Residue Lys-335 forms a Glycyl lysine isopeptide (Lys-Gly) (interchain with G-Cter in SUMO); alternate linkage. Lys-335 is covalently cross-linked (Glycyl lysine isopeptide (Lys-Gly) (interchain with G-Cter in ubiquitin); alternate). Residues Lys-350 and 364-366 (RLS) contribute to the 2',3'-cGAMP site. 364–371 (RLSFSHTE) serves as a coordination point for GTP. Position 371 (Glu-371) interacts with ATP. A Glycyl lysine isopeptide (Lys-Gly) (interchain with G-Cter in SUMO); alternate cross-link involves residue Lys-372. Residue Lys-372 forms a Glycyl lysine isopeptide (Lys-Gly) (interchain with G-Cter in ubiquitin); alternate linkage. Lys-372 carries the post-translational modification N6-acetyllysine. The segment at 372 to 395 (KYILNNHGIEKTCCESSGAKCCRK) is DNA-binding. His-378 is a binding site for Zn(2+). Lys-382 participates in a covalent cross-link: Glycyl lysine isopeptide (Lys-Gly) (interchain with G-Cter in SUMO). Lys-382 carries the N6-acetyllysine modification. 3 residues coordinate Zn(2+): Cys-384, Cys-385, and Cys-392. 2 S-palmitoyl cysteine lipidation sites follow: Cys-392 and Cys-393. Glycyl lysine isopeptide (Lys-Gly) (interchain with G-Cter in ubiquitin) cross-links involve residues Lys-399, Lys-402, Lys-409, and Lys-410. Lys-402 is a binding site for ATP. Lys-402 is subject to N6-acetyllysine. Ser-420 is modified (phosphoserine). Residue 420-424 (SYHVK) coordinates ATP. Cys-459 carries the S-palmitoyl cysteine lipid modification. Lys-464 is covalently cross-linked (Glycyl lysine isopeptide (Lys-Gly) (interchain with G-Cter in SUMO); alternate). Residue Lys-464 forms a Glycyl lysine isopeptide (Lys-Gly) (interchain with G-Cter in ubiquitin); alternate linkage. An N6-methyllysine modification is found at Lys-491.

Belongs to the mab-21 family. As to quaternary structure, monomer in the absence of DNA. Homodimer in presence of dsDNA: forms a 2:2 dimer with two enzymes binding to two DNA molecules. Interacts with nucleosomes; interaction is mainly mediated via histones H2A and H2B and inactivates the nucleotidyltransferase activity by blocking DNA-binding and subsequent activation. Interacts with PQBP1 (via WW domain). Interacts with TRIM14; this interaction recruits USP14, leading to deubiquitinate and stabilize CGAS and promote type I interferon production. Interacts with ZCCHC3; promoting sensing of dsDNA by CGAS. Interacts (when not monomethylated) with (poly-ADP-ribosylated) PARP1; interaction takes place in the nucleus and prevents the formation of the PARP1-TIMELESS complex. Interacts (when monomethylated) with SGF29; interaction with SGF29 prevents interaction with PARP1. Interacts with PCBP2; preventing the formation of liquid-like droplets in which CGAS is activated. Interacts with Irgm1; promoting CGAS degradation. Interacts with DDX41. Mg(2+) is required as a cofactor. The cofactor is Mn(2+). Zn(2+) serves as cofactor. The N-terminal disordered part (1-146) is phosphorylated by AURKB during the G2-M transition, blocking CGAS liquid phase separation and preventing activation. Phosphorylation at Tyr-201 by BLK promotes cytosolic retention. Localizes into the nucleus following dephosphorylation at Tyr-201. Phosphorylation at Ser-420 activates the nucleotidyltransferase activity. Dephosphorylation at Ser-420 by PPP6C impairs its ability to bind GTP, thereby inactivating it. Phosphorylation at Thr-52 and Ser-199 by PRKDC inhibits its cyclic GMP-AMP synthase activity by impairing homodimerization and activation. Phosphorylation at Ser-291 by AKT (AKT1, AKT2 or AKT3) suppresses the nucleotidyltransferase activity. Phosphorylation at Ser-291 by CDK1 during mitosis leads to its inhibition, thereby preventing CGAS activation by self-DNA during mitosis. Dephosphorylated at Ser-291 by protein phosphatase PP1 upon mitotic exit. Post-translationally, ubiquitinated at Lys-402 via 'Lys-48'-linked polyubiquitin chains, leading to its SQSTM1-mediated autophagic degradation. Interaction with TRIM14 promotes recruitment of USP14, leading to deubiquitinate Lys-402 and stabilize CGAS. Ubiquitinated at Lys-372 by RNF185 via 'Lys-27'-linked polyubiquitination, promoting CGAS cyclic GMP-AMP synthase activity. Monoubiquitination at Lys-335 by TRIM56 promotes oligomerization and subsequent activation. Monoubiquitination by TRIM41 promotes CGAS activation. Ubiquitination at Lys-271 and Lys-464 via 'Lys-48'-linked polyubiquitination promotes its degradation. Deubiquitination at Lys-271 by USP29 promotes its stabilization. Deubiquitinated by USP27X, promoting its stabilization. Ubiquitinated at Lys-399 via 'Lys-63'-linked polyubiquitin chains by MARCHF8, leading to the inhibition of its DNA binding ability. In cycling cells, nucleosome-bound CGAS is ubiquitinated at Lys-409 and Lys-410 via 'Lys-48'-linked polyubiquitin chains by the ECS(SPSB3) complex, leading to its degradation: ubiquitination and degradation of nuclear CGAS during G1 and G2 phases is required to promote low intranuclear CGAS abundance before the next mitotic cycle. In terms of processing, sumoylated at Lys-217 and Lys-464 by TRIM38 in uninfected cells and during the early phase of viral infection, promoting its stability by preventing ubiquitination at Lys-271 and Lys-464, and subsequent degradation. Desumoylated by SENP2 during the late phase of viral infection. Sumoylation at Lys-335, Lys-372 and Lys-382 prevents DNA-binding, oligomerization and nucleotidyltransferase activity. Desumoylation at Lys-335, Lys-372 and Lys-382 by SENP7 relieves inhibition and activates CGAS. Polyglutamylated by TTLL6 at Glu-272, leading to impair DNA-binding activity. Monoglutamylated at Glu-302 by TTLL4, leading to impair the nucleotidyltransferase activity. Deglutamylated by AGBL5/CCP5 and AGBL6/CCP6. Post-translationally, acetylation at Lys-372, Lys-382 and Lys-402 inhibits the cyclic GMP-AMP synthase activity. Deacetylated upon cytosolic DNA challenge such as viral infections. Acetylation by KAT5 increases the cyclic GMP-AMP synthase activity by promoting DNA-binding and subsequent activation. In terms of processing, proteolytically cleaved by apoptotic caspases during apoptosis, leading to its inactivation. The damage of the nucleus and the mitochondria during apoptosis leads to leakage of nuclear and mitochondrial DNA, which activate CGAS: cleavage and inactivation during apoptosis in required to prevent cytokine overproduction. Cleaved by CASP7 and CASP3 during virus-induced apoptosis, thereby inactivating it and preventing cytokine overproduction. Cleaved by CASP1 upon DNA virus infection; the cleavage impairs cGAMP production. Also cleaved by the pyroptotic CASP4 during non-canonical inflammasome activation; does not cut at the same sites than CASP1. Degraded via selective autophagy following interaction with Irgm1. Irgm1 promotes CGAS recruitment to autophagosome membranes, promoting its SQSTM1/p62-dependent autophagic degradation. Post-translationally, poly-ADP-ribosylation at Glu-176 by PARP1 impairs DNA-binding, thereby preventing the cyclic GMP-AMP synthase activity. In terms of processing, palmitoylation at Cys-459 by ZDHHC18 impairs DNA-binding, thereby preventing the cyclic GMP-AMP synthase activity. Palmitoylation at Cys-392 and Cys-393 by ZDHHC9 promotes homodimerization and cyclic GMP-AMP synthase activity. Depalmitoylation at Cys-392 and Cys-393 by LYPLAL1 impairs homodimerization and cyclic GMP-AMP synthase activity. Monomethylated at Lys-491 by SETD7. Monomethylation promotes interaction with SGF29, preventing interaction between PARP1 nad SGF29. Demethylation by RIOX1 promotes interaction with PARP1, followed by PARP1 inactivation. Post-translationally, lactylation by AARS2 prevents ability to undergo liquid-liquid phase separation (LLPS), thereby inhibiting CGAS activation.

It localises to the nucleus. Its subcellular location is the chromosome. It is found in the cell membrane. The protein localises to the cytoplasm. The protein resides in the cytosol. The catalysed reaction is GTP + ATP = 2',3'-cGAMP + 2 diphosphate. The enzyme catalyses GTP + ATP = pppGp(2'-5')A + diphosphate. It carries out the reaction pppGp(2'-5')A = 2',3'-cGAMP + diphosphate. The enzyme activity is strongly increased by double-stranded DNA (dsDNA), but not by single-stranded DNA or RNA. DNA-binding induces the formation of liquid-like droplets in which CGAS is activated. Liquid-like droplets also create a selective environment that restricts entry of negative regulators, such as TREX1 or BANF1/BAF, allowing sensing of DNA. A number of mechanisms exist to restrict its activity toward self-DNA. The nucleotidyltransferase activity is inhibited in the nucleus via its association with nucleosomes: interacts with the acidic patch of histones H2A and H2B, thereby blocking DNA-binding and subsequent activation. CGAS is also inactive when associated with mitotic chromatin. Chromatin-bound CGAS cannot be activated by exogenous DNA in mitotic cells: phosphorylation of the N-terminal disordered part by AURKB during the G2-M transition blocks CGAS liquid phase separation and activation. Activity toward self-DNA is inhibited by BANF1/BAF upon acute loss of nuclear membrane integrity: BANF1/BAF acts by outcompeting CGAS for DNA-binding, thereby preventing CGAS activation. DNA-induced activation at micronuclei is also limited by TREX1, which degrades micronuclear DNA upon nuclear envelope rupture, thereby preventing CGAS activation. CGAS can be released from nucleosomes and activated by MRE11 component of the MRN complex, which displaces CGAS from acidic-patch-mediated sequestration. Acetylation at Lys-372, Lys-382 and Lys-402 inhibits the cyclic GMP-AMP synthase activity. Acetylation by KAT5 increases the cyclic GMP-AMP synthase activity by promoting DNA-binding and subsequent activation. Phosphorylation at Ser-291 suppresses the nucleotidyltransferase activity. Phosphorylation at Ser-420 promotes the cyclic GMP-AMP synthase activity. Phosphorylation at Thr-52 and Ser-199 inhibits its cyclic GMP-AMP synthase activity. Ubiquitination at Lys-372 via 'Lys-27'-linked polyubiquitination enhances the cyclic GMP-AMP synthase activity. Monoubiquitination at Lys-335 promotes oligomerization and subsequent activation. Sumoylation at Lys-335, Lys-372 and Lys-382 prevents DNA-binding, oligomerization and nucleotidyltransferase activity. The enzyme activity is impaired by the cleavage by CASP1. In addition to DNA, also activated by collided ribosomes upon translation stress: specifically binds collided ribosomes, promoting its activation and triggering type-I interferon production. In hematopoietic stem cells, binding to circular RNA cia-cGAS inhibits the cyclic GMP-AMP synthase activity. Strongly inhibited by compound RU.521, which is specific for mouse protein. In terms of biological role, nucleotidyltransferase that catalyzes the formation of cyclic GMP-AMP (2',3'-cGAMP) from ATP and GTP and plays a key role in innate immunity. Catalysis involves both the formation of a 2',5' phosphodiester linkage at the GpA step and the formation of a 3',5' phosphodiester linkage at the ApG step, producing c[G(2',5')pA(3',5')p]. Acts as a key DNA sensor: directly binds double-stranded DNA (dsDNA), inducing the formation of liquid-like droplets in which CGAS is activated, leading to synthesis of 2',3'-cGAMP, a second messenger that binds to and activates STING1, thereby triggering type-I interferon production. Preferentially binds long dsDNA (around 45 bp) and forms ladder-like networks that function cooperatively to stabilize individual cGAS-dsDNA complexes. Acts as a key foreign DNA sensor, the presence of double-stranded DNA (dsDNA) in the cytoplasm being a danger signal that triggers the immune responses. Has antiviral activity by sensing the presence of dsDNA from DNA viruses in the cytoplasm. Also acts as an innate immune sensor of infection by retroviruses by detecting the presence of reverse-transcribed DNA in the cytosol. Detection of retroviral reverse-transcribed DNA in the cytosol may be indirect and be mediated via interaction with PQBP1, which directly binds reverse-transcribed retroviral DNA. Also detects the presence of DNA from bacteria. 2',3'-cGAMP can be transferred from producing cells to neighboring cells through gap junctions, leading to promote STING1 activation and convey immune response to connecting cells. 2',3'-cGAMP can also be transferred between cells by virtue of packaging within viral particles contributing to IFN-induction in newly infected cells in a cGAS-independent but STING1-dependent manner. Also senses the presence of neutrophil extracellular traps (NETs) that are translocated to the cytosol following phagocytosis, leading to synthesis of 2',3'-cGAMP. In addition to foreign DNA, can also be activated by endogenous nuclear or mitochondrial DNA. When self-DNA leaks into the cytosol during cellular stress (such as mitochondrial stress, DNA damage, mitotic arrest or senescence), or is present in form of cytosolic micronuclei, CGAS is activated leading to a state of sterile inflammation. Acts as a regulator of cellular senescence by binding to cytosolic chromatin fragments that are present in senescent cells, leading to trigger type-I interferon production via STING1 and promote cellular senescence. Also involved in the inflammatory response to genome instability and double-stranded DNA breaks: acts by localizing to micronuclei arising from genome instability. Micronuclei, which as frequently found in cancer cells, consist of chromatin surrounded by its own nuclear membrane: following breakdown of the micronuclear envelope, a process associated with chromothripsis, CGAS binds self-DNA exposed to the cytosol, leading to 2',3'-cGAMP synthesis and subsequent activation of STING1 and type-I interferon production. In a healthy cell, CGAS is however kept inactive even in cellular events that directly expose it to self-DNA, such as mitosis, when cGAS associates with chromatin directly after nuclear envelope breakdown or remains in the form of postmitotic persistent nuclear cGAS pools bound to chromatin. Nuclear CGAS is inactivated by chromatin via direct interaction with nucleosomes, which block CGAS from DNA binding and thus prevent CGAS-induced autoimmunity. Also acts as a suppressor of DNA repair in response to DNA damage: inhibits homologous recombination repair by interacting with PARP1, the CGAS-PARP1 interaction leading to impede the formation of the PARP1-TIMELESS complex. In addition to DNA, also sense translation stress: in response to translation stress, translocates to the cytosol and associates with collided ribosomes, promoting its activation and triggering type-I interferon production. This Mus musculus (Mouse) protein is Cyclic GMP-AMP synthase.